The following is a 270-amino-acid chain: MAAPGEALTSSGYIAHHLSNLSLAKLGLVADEASFWNVHIDSLFFSWFTGLIFLGIFYKVAKRTTAGVPGKLQCAVEMIVEFVAENVKDTFHGRNPLIAPLALTIFCWVFLMNVMDLVPIDFLPYPAEHWLGIPYLKVVPSADVNITMAMALGVFALMIYYSIKVKGLGGFAKELALHPFNHPLMIPFNLLIEVVSLLAKPLSLGMRLFGNMFAGEVVFILCAAMLPWYLQWMGSLPWAIFHILVITIQAFVFMMLTIVYLSMAHEDSDH.

The next 5 membrane-spanning stretches (helical) occupy residues 38 to 58 (VHID…GIFY), 98 to 118 (IAPL…MDLV), 143 to 163 (DVNI…YYSI), 208 to 228 (LFGN…MLPW), and 239 to 259 (AIFH…LTIV).

The protein belongs to the ATPase A chain family. F-type ATPases have 2 components, CF(1) - the catalytic core - and CF(0) - the membrane proton channel. CF(1) has five subunits: alpha(3), beta(3), gamma(1), delta(1), epsilon(1). CF(0) has three main subunits: a(1), b(2) and c(9-12). The alpha and beta chains form an alternating ring which encloses part of the gamma chain. CF(1) is attached to CF(0) by a central stalk formed by the gamma and epsilon chains, while a peripheral stalk is formed by the delta and b chains.

The protein localises to the cell inner membrane. Key component of the proton channel; it plays a direct role in the translocation of protons across the membrane. In Vibrio campbellii (strain ATCC BAA-1116), this protein is ATP synthase subunit a 1.